Here is a 650-residue protein sequence, read N- to C-terminus: Acetyl-coenzyme A synthetase (650 aa).

Residues 191–194 (RGGR), T311, and N335 contribute to the CoA site. ATP is bound by residues 387–389 (GEP), 411–416 (DTWWQT), D500, and R515. S523 contributes to the CoA binding site. ATP is bound at residue R526. Mg(2+) is bound by residues V537, H539, and V542. R584 is a CoA binding site. Residue K609 is modified to N6-acetyllysine.

This sequence belongs to the ATP-dependent AMP-binding enzyme family. It depends on Mg(2+) as a cofactor. Post-translationally, acetylated. Deacetylation by the SIR2-homolog deacetylase activates the enzyme.

The catalysed reaction is acetate + ATP + CoA = acetyl-CoA + AMP + diphosphate. In terms of biological role, catalyzes the conversion of acetate into acetyl-CoA (AcCoA), an essential intermediate at the junction of anabolic and catabolic pathways. AcsA undergoes a two-step reaction. In the first half reaction, AcsA combines acetate with ATP to form acetyl-adenylate (AcAMP) intermediate. In the second half reaction, it can then transfer the acetyl group from AcAMP to the sulfhydryl group of CoA, forming the product AcCoA. This Shewanella amazonensis (strain ATCC BAA-1098 / SB2B) protein is Acetyl-coenzyme A synthetase.